We begin with the raw amino-acid sequence, 160 residues long: uncharacterized protein (160 aa).

The RING-type zinc finger occupies Cys8 to Arg46.

This is an uncharacterized protein from Caenorhabditis elegans.